Here is a 397-residue protein sequence, read N- to C-terminus: MPQLSGGGGGGDPELCATDEMIPFKDEGDPQKEKIFAEISHPEEEGDLADIKSSLVNESEIIPASNGHEVVGQTQSSQEPYHDKAREHPDDGKHPDGGLYNKGPSYSSYSGYIMMPNMNSDPYMSNGSLSPPIPRTSNKVPVVQPSHAVHPLTPLITYSDEHFSPGSHPSHIPSEVNPKQGMSRHPPAPEMPTFYPLSPGGVGQITPPLGWQGQPVYPITGGFRQAYPSSLSGDTSMSRFSHHMIPGPPGPHTTGIPHPAIVTPQVKQEHPHTDSDLMHVKPEHEQRKEQEPKRPHIKKPLNAFMLYMKEMRANVVAECTLKESAAINQILGRRWHALSREEQAKYYELARKERQLHMQLYPGWSARDNYGKKKKRKREKLQESTSGTGPRMTAAYI.

The tract at residues 1-60 (MPQLSGGGGGGDPELCATDEMIPFKDEGDPQKEKIFAEISHPEEEGDLADIKSSLVNESE) is CTNNB1-binding. Residue lysine 25 forms a Glycyl lysine isopeptide (Lys-Gly) (interchain with G-Cter in SUMO) linkage. Positions 38–102 (EISHPEEEGD…KHPDGGLYNK (65 aa)) are disordered. Over residues 80–96 (PYHDKAREHPDDGKHPD) the composition is skewed to basic and acidic residues. Serine 130 is subject to Phosphoserine. At threonine 153 the chain carries Phosphothreonine; by NLK. Serine 164 carries the post-translational modification Phosphoserine; by NLK. Disordered regions lie at residues 164–190 (SPGS…PAPE) and 266–296 (VKQE…KRPH). A Glycyl lysine isopeptide (Lys-Gly) (interchain with G-Cter in SUMO) cross-link involves residue lysine 267. Residues 267-294 (KQEHPHTDSDLMHVKPEHEQRKEQEPKR) are compositionally biased toward basic and acidic residues. The segment at residues 297 to 365 (IKKPLNAFML…LHMQLYPGWS (69 aa)) is a DNA-binding region (HMG box). The disordered stretch occupies residues 367-397 (RDNYGKKKKRKREKLQESTSGTGPRMTAAYI).

The protein belongs to the TCF/LEF family. In terms of assembly, binds the armadillo repeat of CTNNB1 and forms a stable complex. Interacts with TLE1, PIASG, ALYREF/THOC4, EP300, MDFI and MDFIC. Interacts with DAZAP2. Post-translationally, phosphorylated at Thr-153 and/or Ser-164 by NLK. Phosphorylation by NLK at these sites represses LEF1-mediated transcriptional activation of target genes of the canonical Wnt signaling pathway.

The protein localises to the nucleus. In terms of biological role, transcription factor that binds DNA in a sequence-specific manner. Participates in the Wnt signaling pathway. Activates transcription of target genes in the presence of CTNNB1 and EP300. PIASG antagonizes both Wnt-dependent and Wnt-independent activation by LEF1. TLE1, TLE2, TLE3 and TLE4 repress transactivation mediated by LEF1 and CTNNB1. Regulates T-cell receptor alpha enhancer function. Required for IL17A expressing gamma-delta T-cell maturation and development, via binding to regulator loci of BLK to modulate expression. Acts as a positive regulator of odontoblast differentiation during mesenchymal tooth germ formation, expression is repressed during the bell stage by MSX1-mediated inhibition of CTNNB1 signaling. May play a role in hair cell differentiation and follicle morphogenesis. This chain is Lymphoid enhancer-binding factor 1, found in Rattus norvegicus (Rat).